We begin with the raw amino-acid sequence, 362 residues long: MTATLERRQAQGLWDRFADWVTSTHNRFYVGWFGVLMIPTLLSATICFVIAFVAAPPVDMDGIREPISGSLLYGNNIITGAVIPSSNAIGLHFYPIWEAASMDEWLYNGGPYQLVVFHFLIGVFCYLGREWELSYRLGLRPWICIAYSAPVAAATAVFLVYPIGQGSFSDGMPLGISGTFNFMFVFQAEHNILNHPFHMLGVAGVFGGALISAMHGSLVTSSLVSETSYEESQNYGYKFGQAEETYNISAAHGYISRLVFQYFAFWGANSRSLHFIMAAFPVIGIWFTSLGISVMAFNLNGFNFNSSIVDSQGRAIYTWADIVNRANLGMEVMHERNAHNFPLDLAGTESAPVAVSTAKVGG.

The next 3 helical transmembrane spans lie at 29–46 (YVGWFGVLMIPTLLSATI), 118–133 (HFLIGVFCYLGREWEL), and 142–156 (WICIAYSAPVAAATA). Position 118 (histidine 118) interacts with chlorophyll a. Residue tyrosine 126 coordinates pheophytin a. Aspartate 170 and glutamate 189 together coordinate [CaMn4O5] cluster. Residues 197–218 (FHMLGVAGVFGGALISAMHGSL) traverse the membrane as a helical segment. Position 198 (histidine 198) interacts with chlorophyll a. A quinone contacts are provided by residues histidine 215 and 264-265 (AF). Histidine 215 provides a ligand contact to Fe cation. Residue histidine 274 coordinates Fe cation. The chain crosses the membrane as a helical span at residues 276 to 290 (IMAAFPVIGIWFTSL). The [CaMn4O5] cluster site is built by histidine 334, glutamate 335, aspartate 344, and alanine 346. The propeptide occupies 347-362 (GTESAPVAVSTAKVGG).

It belongs to the reaction center PufL/M/PsbA/D family. As to quaternary structure, PSII is composed of 1 copy each of membrane proteins PsbA, PsbB, PsbC, PsbD, PsbE, PsbF, PsbH, PsbI, PsbJ, PsbK, PsbL, PsbM, PsbT, PsbX, Psb30/Ycf12, peripheral proteins PsbO, CyanoQ (PsbQ), PsbU, PsbV and a large number of cofactors. It forms dimeric complexes. The cofactor is The D1/D2 heterodimer binds P680, chlorophylls that are the primary electron donor of PSII, and subsequent electron acceptors. It shares a non-heme iron and each subunit binds pheophytin, quinone, additional chlorophylls, carotenoids and lipids. D1 provides most of the ligands for the Mn4-Ca-O5 cluster of the oxygen-evolving complex (OEC). There is also a Cl(-1) ion associated with D1 and D2, which is required for oxygen evolution. The PSII complex binds additional chlorophylls, carotenoids and specific lipids.. In terms of processing, tyr-161 forms a radical intermediate that is referred to as redox-active TyrZ, YZ or Y-Z. C-terminally processed by CtpA; processing is essential to allow assembly of the oxygen-evolving complex and thus photosynthetic growth.

The protein localises to the cell inner membrane. The catalysed reaction is 2 a plastoquinone + 4 hnu + 2 H2O = 2 a plastoquinol + O2. In terms of biological role, photosystem II (PSII) is a light-driven water:plastoquinone oxidoreductase that uses light energy to abstract electrons from H(2)O, generating O(2) and a proton gradient subsequently used for ATP formation. It consists of a core antenna complex that captures photons, and an electron transfer chain that converts photonic excitation into a charge separation. The D1/D2 (PsbA/PsbD) reaction center heterodimer binds P680, the primary electron donor of PSII as well as several subsequent electron acceptors. The sequence is that of Photosystem II protein D1 3 from Gloeobacter violaceus (strain ATCC 29082 / PCC 7421).